Reading from the N-terminus, the 585-residue chain is MEVPVGPGPRQAGGGLGATRSSSSGRAARTAEMPWARFSAWLECVCVVTFDLELGQALELVYPSDFRLTDKEKSSICYLAFPDSHSGCLGDTQFSFRMRQCGGQRSLWQVDDRSYNNKAPLALQREPAHYLGYVYFRQVKDSSVKRGYFQKSLVLVSRLPFVRLFQSLLSLIAPEYFEKLAPCLEAVCNEIDQWPAPVPGQTLNLPIMGVVIQVRIPSRVDKLESSPPKQCDQENLLPAPVVLTSVHELDLFRCFRPVLTHVQTLWELMLLGEPLVVLAPSPDVSSELVLALTSCLQPLKFCCDFRPYFTIHDSEFKELTTRTQAPPNVVLGVTNPFFIKTLQHWPHVLRIGEPKMSGDLPKQVKLKKPSRLKTLDTKPGLYTSYTAHLHRDKALLKRLLKGVQKKRPWDVQSALLRRHLLELTQSFIIPLEHYMASLMPLQKNITPWKSPPQICPFRQDDFLRSLEHAGPQLTCILKGDWLGLYRRFFKSPHFDGWYRQRHKEMAQKLEALHLEAICEANIEAWMKDKSEVEVVDLVLKLREKLVRAQGHQLPVKEVTLQRAQLYIDTVIGSLPKDLQAVLCPP.

Low complexity predominate over residues 1-10 (MEVPVGPGPR). The disordered stretch occupies residues 1-25 (MEVPVGPGPRQAGGGLGATRSSSSG). Residues 43–221 (ECVCVVTFDL…IQVRIPSRVD (179 aa)) form the uDENN domain. The region spanning 246-373 (VHELDLFRCF…VKLKKPSRLK (128 aa)) is the cDENN domain. A dDENN domain is found at 375–499 (LDTKPGLYTS…KSPHFDGWYR (125 aa)).

The protein belongs to the DENND6 family.

The protein localises to the recycling endosome. It localises to the cytoplasm. Guanine nucleotide exchange factor (GEF) for RAB14. Also has some, lesser GEF activity towards RAB35. This Mus musculus (Mouse) protein is Protein DENND6B (Dennd6b).